The following is a 328-amino-acid chain: 3-dehydroquinate synthase (328 aa).

It belongs to the archaeal-type DHQ synthase family.

It catalyses the reaction 2-amino-2,3,7-trideoxy-D-lyxo-hept-6-ulosonate + NAD(+) + H2O = 3-dehydroquinate + NH4(+) + NADH + H(+). Its function is as follows. Catalyzes the oxidative deamination and cyclization of 2-amino-3,7-dideoxy-D-threo-hept-6-ulosonic acid (ADH) to yield 3-dehydroquinate (DHQ), which is fed into the canonical shikimic pathway of aromatic amino acid biosynthesis. The polypeptide is 3-dehydroquinate synthase (Methanoculleus marisnigri (strain ATCC 35101 / DSM 1498 / JR1)).